The chain runs to 469 residues: 3-isopropylmalate dehydratase large subunit (469 aa).

Positions 349, 410, and 413 each coordinate [4Fe-4S] cluster.

It belongs to the aconitase/IPM isomerase family. LeuC type 1 subfamily. Heterodimer of LeuC and LeuD. [4Fe-4S] cluster is required as a cofactor.

It catalyses the reaction (2R,3S)-3-isopropylmalate = (2S)-2-isopropylmalate. It functions in the pathway amino-acid biosynthesis; L-leucine biosynthesis; L-leucine from 3-methyl-2-oxobutanoate: step 2/4. In terms of biological role, catalyzes the isomerization between 2-isopropylmalate and 3-isopropylmalate, via the formation of 2-isopropylmaleate. In Neisseria gonorrhoeae (strain ATCC 700825 / FA 1090), this protein is 3-isopropylmalate dehydratase large subunit.